Here is a 418-residue protein sequence, read N- to C-terminus: Glutamyl-tRNA(Gln) amidotransferase subunit D (418 aa).

The 332-residue stretch at 74-405 folds into the Asparaginase/glutaminase domain; that stretch reads KNISILSTGG…KEAKELMSKN (332 aa). Catalysis depends on residues Thr84, Thr160, Asp161, and Lys237.

It belongs to the asparaginase 1 family. GatD subfamily. In terms of assembly, heterodimer of GatD and GatE.

The catalysed reaction is L-glutamyl-tRNA(Gln) + L-glutamine + ATP + H2O = L-glutaminyl-tRNA(Gln) + L-glutamate + ADP + phosphate + H(+). In terms of biological role, allows the formation of correctly charged Gln-tRNA(Gln) through the transamidation of misacylated Glu-tRNA(Gln) in organisms which lack glutaminyl-tRNA synthetase. The reaction takes place in the presence of glutamine and ATP through an activated gamma-phospho-Glu-tRNA(Gln). The GatDE system is specific for glutamate and does not act on aspartate. In Methanococcus maripaludis (strain DSM 14266 / JCM 13030 / NBRC 101832 / S2 / LL), this protein is Glutamyl-tRNA(Gln) amidotransferase subunit D.